A 904-amino-acid chain; its full sequence is Myelin regulatory factor-like protein (904 aa).

Residues 46–132 (LQRQLPDTPP…ATCRHQTGPS (87 aa)) form a disordered region. A compositionally biased stretch (polar residues) spans 100–117 (PSQSMAGQTHSSFQNGYP). The NDT80 DNA-binding region spans 108–400 (THSSFQNGYP…SNPGQFENDS (293 aa)). In terms of domain architecture, Peptidase S74 spans 446–554 (SDSRVKENIQ…KLTNNLEERI (109 aa)). Residues 538-575 (GAVKQLCKLTNNLEERIEELEIWNKKLARLKRLSSSWK) are a coiled coil. Residues 624 to 644 (LVVVLIAVMAFCALTIVALYI) form a helical membrane-spanning segment. The segment at 656 to 688 (NLPLSNMTSSPEPALSSTAPTSAPHTTPETTQT) is disordered. The span at 663–688 (TSSPEPALSSTAPTSAPHTTPETTQT) shows a compositional bias: low complexity.

This sequence belongs to the MRF family.

It is found in the membrane. The chain is Myelin regulatory factor-like protein (Myrfl) from Mus musculus (Mouse).